Reading from the N-terminus, the 229-residue chain is N-acetyltransferase MPR1 (229 aa).

The region spanning 65–219 is the N-acetyltransferase domain; that stretch reads FNLEIESGKT…DAIIYGKDLT (155 aa). Asn-135 lines the substrate pocket. CoA is bound at residue 145-150; it reads RGQKVG. 172–173 serves as a coordination point for substrate; that stretch reads NL.

It belongs to the acetyltransferase family. As to quaternary structure, homodimer. Not glycosylated.

The protein resides in the cytoplasm. The protein localises to the mitochondrion. The enzyme catalyses L-glutamate 5-semialdehyde + acetyl-CoA = N-acetyl-L-glutamate 5-semialdehyde + CoA + H(+). Its function is as follows. N-acetyltransferase involved in oxidative stress resistance. Acetylates the toxic proline metabolism intermediate (S)-1-pyrroline-5-carboxylate (P5C), or more likely its spontaneously forming tautomer glutamate-5-semialdehyde (GSA) into N-acetyl-GSA for arginine synthesis in the mitochondria. P5C has been shown to increase the levels of reactive oxygen species (ROS) in the cell by inhibiting the function of the respiratory chain in the mitochondria. The enzyme is able to reduce intracellular ROS levels under P5C-induced oxidative stress and protects cells from damage by oxidative stress. Also acetylates and thereby detoxifies the proline analog azetidine-2-carboxylate (AZC), however it is unlikely that AZC is a natural substrate as it occurs only in plants belonging to the Lilaceae family. Does not acetylate proline. The protein is N-acetyltransferase MPR1 of Saccharomyces cerevisiae (Baker's yeast).